The following is a 343-amino-acid chain: Thromboxane A2 receptor (343 aa).

Over 1 to 29 (MWPNGSSLGPCFRPTNITLEERRLIASPW) the chain is Extracellular. N-linked (GlcNAc...) asparagine glycans are attached at residues N4 and N16. A helical transmembrane segment spans residues 30–52 (FAASFCVVGLASNLLALSVLAGA). Over 53–66 (RQGGSHTRSSFLTF) the chain is Cytoplasmic. The helical transmembrane segment at 67–87 (LCGLVLTDFLGLLVTGAIVVS) threads the bilayer. Residues 88 to 106 (QHAALFEWHAVDPGCRLCR) lie on the Extracellular side of the membrane. A disulfide bridge links C105 with C183. The helical transmembrane segment at 107 to 128 (FMGVVMIFFGLSPLLLGATMAS) threads the bilayer. The Cytoplasmic portion of the chain corresponds to 129 to 149 (ERFLGITRPFSRPVVTSQRRA). A helical membrane pass occupies residues 150-172 (WATVGLVWAAALALGLLPLLGLG). Residues 173–193 (RYTVQYPGSWCFLTLGAESGD) are Extracellular-facing. The chain crosses the membrane as a helical span at residues 194-219 (VAFGLLFSMLGGLSVGLSFLLNTVSV). The Cytoplasmic portion of the chain corresponds to 220 to 246 (ATLCHVYHGQEAAQQRPRDSEVEMMAQ). Residues 247 to 270 (LLGIMLVASVCWLPLLVFIAQTVL) form a helical membrane-spanning segment. The Extracellular segment spans residues 271 to 289 (RNPPAMSPSGQLSRATEQE). Residues 290–311 (LLIYLRVATWNQILDPWVYILF) form a helical membrane-spanning segment. The Cytoplasmic portion of the chain corresponds to 312–343 (RRAVLRRLQPRLSTRPRSLSLQPQLTQRSGLQ). Residues S329 and S331 each carry the phosphoserine modification.

The protein belongs to the G-protein coupled receptor 1 family. Interacts with RPGRIP1L. Interacts with RACK1; the interaction regulates TBXA2R cell surface expression.

The protein resides in the cell membrane. In terms of biological role, receptor for thromboxane A2 (TXA2), a potent stimulator of platelet aggregation. The activity of this receptor is mediated by a G-protein that activates a phosphatidylinositol-calcium second messenger system. In the kidney, the binding of TXA2 to glomerular TP receptors causes intense vasoconstriction. Activates phospholipase C and adenylyl cyclase. The protein is Thromboxane A2 receptor (TBXA2R) of Chlorocebus aethiops (Green monkey).